The sequence spans 89 residues: Small ribosomal subunit protein uS15 (89 aa).

The protein belongs to the universal ribosomal protein uS15 family. As to quaternary structure, part of the 30S ribosomal subunit. Forms a bridge to the 50S subunit in the 70S ribosome, contacting the 23S rRNA.

One of the primary rRNA binding proteins, it binds directly to 16S rRNA where it helps nucleate assembly of the platform of the 30S subunit by binding and bridging several RNA helices of the 16S rRNA. Functionally, forms an intersubunit bridge (bridge B4) with the 23S rRNA of the 50S subunit in the ribosome. This is Small ribosomal subunit protein uS15 from Chlamydia muridarum (strain MoPn / Nigg).